Here is a 144-residue protein sequence, read N- to C-terminus: Large ribosomal subunit protein uL13 (144 aa).

This sequence belongs to the universal ribosomal protein uL13 family. As to quaternary structure, part of the 50S ribosomal subunit.

In terms of biological role, this protein is one of the early assembly proteins of the 50S ribosomal subunit, although it is not seen to bind rRNA by itself. It is important during the early stages of 50S assembly. This chain is Large ribosomal subunit protein uL13, found in Nitrosospira multiformis (strain ATCC 25196 / NCIMB 11849 / C 71).